A 235-amino-acid chain; its full sequence is Large ribosomal subunit protein uL1 (235 aa).

It belongs to the universal ribosomal protein uL1 family. Part of the 50S ribosomal subunit.

In terms of biological role, binds directly to 23S rRNA. The L1 stalk is quite mobile in the ribosome, and is involved in E site tRNA release. Protein L1 is also a translational repressor protein, it controls the translation of the L11 operon by binding to its mRNA. The sequence is that of Large ribosomal subunit protein uL1 from Solidesulfovibrio magneticus (strain ATCC 700980 / DSM 13731 / RS-1) (Desulfovibrio magneticus).